We begin with the raw amino-acid sequence, 337 residues long: tRNA N6-adenosine threonylcarbamoyltransferase (337 aa).

Residues His111 and His115 each coordinate Fe cation. Substrate contacts are provided by residues Leu134–Gly138, Asp167, Gly180, and Asn272. Asp300 is a Fe cation binding site.

It belongs to the KAE1 / TsaD family. Fe(2+) serves as cofactor.

The protein resides in the cytoplasm. The catalysed reaction is L-threonylcarbamoyladenylate + adenosine(37) in tRNA = N(6)-L-threonylcarbamoyladenosine(37) in tRNA + AMP + H(+). Required for the formation of a threonylcarbamoyl group on adenosine at position 37 (t(6)A37) in tRNAs that read codons beginning with adenine. Is involved in the transfer of the threonylcarbamoyl moiety of threonylcarbamoyl-AMP (TC-AMP) to the N6 group of A37, together with TsaE and TsaB. TsaD likely plays a direct catalytic role in this reaction. The sequence is that of tRNA N6-adenosine threonylcarbamoyltransferase from Salmonella newport (strain SL254).